Here is a 151-residue protein sequence, read N- to C-terminus: Aspartate carbamoyltransferase regulatory chain (151 aa).

Cys-108, Cys-113, Cys-138, and Cys-141 together coordinate Zn(2+).

Belongs to the PyrI family. As to quaternary structure, contains catalytic and regulatory chains. Zn(2+) is required as a cofactor.

In terms of biological role, involved in allosteric regulation of aspartate carbamoyltransferase. The chain is Aspartate carbamoyltransferase regulatory chain from Pyrobaculum arsenaticum (strain DSM 13514 / JCM 11321 / PZ6).